The sequence spans 515 residues: Kelch repeat protein M-T8 (515 aa).

Positions Cys-16 to Lys-82 constitute a BTB domain. Kelch repeat units lie at residues Val-280–Gly-326, Ile-328–Asn-374, Ile-376–Glu-423, Arg-424–Asp-471, and Leu-473–Tyr-512.

This sequence belongs to the poxviruses Kelch family.

The sequence is that of Kelch repeat protein M-T8 from Oryctolagus cuniculus (Rabbit).